A 1040-amino-acid polypeptide reads, in one-letter code: Alpha-mannosidase 2C1 (1040 aa).

Co(2+)-binding residues include histidine 260, aspartate 262, aspartate 372, and histidine 577. Aspartate 372 acts as the Nucleophile in catalysis.

It belongs to the glycosyl hydrolase 38 family. Requires Co(2+) as cofactor.

The protein localises to the cytoplasm. The enzyme catalyses Hydrolysis of terminal, non-reducing alpha-D-mannose residues in alpha-D-mannosides.. Strongly inhibited by swainsonine. Also inhibited to a lesser extent by deoxymannojirimycin (DMM). In terms of biological role, cleaves alpha 1,2-, alpha 1,3-, and alpha 1,6-linked mannose residues on cytoplasmic free oligosaccharides generated by N-glycoprotein degradation pathways. This is Alpha-mannosidase 2C1 (MAN2C1) from Homo sapiens (Human).